We begin with the raw amino-acid sequence, 671 residues long: UvrABC system protein B (671 aa).

The region spanning 35-423 (KAIIENKKHQ…NHQVVQQIIR (389 aa)) is the Helicase ATP-binding domain. Position 48-55 (48-55 (GATGTGKT)) interacts with ATP. Positions 101-124 (NFDFFQPEAYIPSKDLYIDKDSRQ) match the Beta-hairpin motif. The Helicase C-terminal domain occupies 440–602 (QIDDIINEIH…IVPKTISKAI (163 aa)). The 36-residue stretch at 632–667 (QQTIDNLRQEMLQAAKELDFERAAILRDTIIELENE) folds into the UVR domain.

Belongs to the UvrB family. In terms of assembly, forms a heterotetramer with UvrA during the search for lesions. Interacts with UvrC in an incision complex.

Its subcellular location is the cytoplasm. The UvrABC repair system catalyzes the recognition and processing of DNA lesions. A damage recognition complex composed of 2 UvrA and 2 UvrB subunits scans DNA for abnormalities. Upon binding of the UvrA(2)B(2) complex to a putative damaged site, the DNA wraps around one UvrB monomer. DNA wrap is dependent on ATP binding by UvrB and probably causes local melting of the DNA helix, facilitating insertion of UvrB beta-hairpin between the DNA strands. Then UvrB probes one DNA strand for the presence of a lesion. If a lesion is found the UvrA subunits dissociate and the UvrB-DNA preincision complex is formed. This complex is subsequently bound by UvrC and the second UvrB is released. If no lesion is found, the DNA wraps around the other UvrB subunit that will check the other stand for damage. This Mycoplasma mycoides subsp. mycoides SC (strain CCUG 32753 / NCTC 10114 / PG1) protein is UvrABC system protein B.